Consider the following 319-residue polypeptide: Acetyl-coenzyme A carboxylase carboxyl transferase subunit alpha (319 aa).

Positions 35–296 (DLDKEIEQLE…KANLLRQLED (262 aa)) constitute a CoA carboxyltransferase C-terminal domain.

This sequence belongs to the AccA family. In terms of assembly, acetyl-CoA carboxylase is a heterohexamer composed of biotin carboxyl carrier protein (AccB), biotin carboxylase (AccC) and two subunits each of ACCase subunit alpha (AccA) and ACCase subunit beta (AccD).

It is found in the cytoplasm. The catalysed reaction is N(6)-carboxybiotinyl-L-lysyl-[protein] + acetyl-CoA = N(6)-biotinyl-L-lysyl-[protein] + malonyl-CoA. The protein operates within lipid metabolism; malonyl-CoA biosynthesis; malonyl-CoA from acetyl-CoA: step 1/1. In terms of biological role, component of the acetyl coenzyme A carboxylase (ACC) complex. First, biotin carboxylase catalyzes the carboxylation of biotin on its carrier protein (BCCP) and then the CO(2) group is transferred by the carboxyltransferase to acetyl-CoA to form malonyl-CoA. The polypeptide is Acetyl-coenzyme A carboxylase carboxyl transferase subunit alpha (Vibrio campbellii (strain ATCC BAA-1116)).